The chain runs to 252 residues: Imidazole glycerol phosphate synthase subunit HisF (252 aa).

Catalysis depends on residues Asp11 and Asp130.

Belongs to the HisA/HisF family. In terms of assembly, heterodimer of HisH and HisF.

It is found in the cytoplasm. It catalyses the reaction 5-[(5-phospho-1-deoxy-D-ribulos-1-ylimino)methylamino]-1-(5-phospho-beta-D-ribosyl)imidazole-4-carboxamide + L-glutamine = D-erythro-1-(imidazol-4-yl)glycerol 3-phosphate + 5-amino-1-(5-phospho-beta-D-ribosyl)imidazole-4-carboxamide + L-glutamate + H(+). It participates in amino-acid biosynthesis; L-histidine biosynthesis; L-histidine from 5-phospho-alpha-D-ribose 1-diphosphate: step 5/9. IGPS catalyzes the conversion of PRFAR and glutamine to IGP, AICAR and glutamate. The HisF subunit catalyzes the cyclization activity that produces IGP and AICAR from PRFAR using the ammonia provided by the HisH subunit. This is Imidazole glycerol phosphate synthase subunit HisF from Persephonella marina (strain DSM 14350 / EX-H1).